Reading from the N-terminus, the 124-residue chain is Ribonuclease pancreatic (124 aa).

The span at 1–13 (KESAAAKFERQHM) shows a compositional bias: basic and acidic residues. Residues 1 to 24 (KESAAAKFERQHMDSSTSSASSSN) form a disordered region. Positions 7 and 10 each coordinate substrate. H12 serves as the catalytic Proton acceptor. Cystine bridges form between C26–C84, C40–C95, C58–C110, and C65–C72. N34 carries an N-linked (GlcNAc...) asparagine; partial glycan. Substrate is bound by residues 41-45 (KPVNT), K66, and R85. H119 (proton donor) is an active-site residue.

It belongs to the pancreatic ribonuclease family. Monomer. Interacts with and forms tight 1:1 complexes with RNH1. Dimerization of two such complexes may occur. Interaction with RNH1 inhibits this protein. Pancreas.

The protein localises to the secreted. It catalyses the reaction an [RNA] containing cytidine + H2O = an [RNA]-3'-cytidine-3'-phosphate + a 5'-hydroxy-ribonucleotide-3'-[RNA].. The catalysed reaction is an [RNA] containing uridine + H2O = an [RNA]-3'-uridine-3'-phosphate + a 5'-hydroxy-ribonucleotide-3'-[RNA].. In terms of biological role, endonuclease that catalyzes the cleavage of RNA on the 3' side of pyrimidine nucleotides. Acts on single-stranded and double-stranded RNA. This is Ribonuclease pancreatic (RNASE1) from Ovis aries (Sheep).